The primary structure comprises 94 residues: DNA-directed RNA polymerase subunit Rpo11 (94 aa).

It belongs to the archaeal Rpo11/eukaryotic RPB11/RPC19 RNA polymerase subunit family. As to quaternary structure, part of the RNA polymerase complex.

Its subcellular location is the cytoplasm. The enzyme catalyses RNA(n) + a ribonucleoside 5'-triphosphate = RNA(n+1) + diphosphate. In terms of biological role, DNA-dependent RNA polymerase (RNAP) catalyzes the transcription of DNA into RNA using the four ribonucleoside triphosphates as substrates. The polypeptide is DNA-directed RNA polymerase subunit Rpo11 (Haloarcula marismortui (strain ATCC 43049 / DSM 3752 / JCM 8966 / VKM B-1809) (Halobacterium marismortui)).